We begin with the raw amino-acid sequence, 362 residues long: Peptide chain release factor 1 (362 aa).

At glutamine 232 the chain carries N5-methylglutamine.

It belongs to the prokaryotic/mitochondrial release factor family. In terms of processing, methylated by PrmC. Methylation increases the termination efficiency of RF1.

Its subcellular location is the cytoplasm. Peptide chain release factor 1 directs the termination of translation in response to the peptide chain termination codons UAG and UAA. The protein is Peptide chain release factor 1 of Myxococcus xanthus.